We begin with the raw amino-acid sequence, 507 residues long: Alkyl hydroperoxide reductase subunit F (507 aa).

Position 207 to 222 (207 to 222 (DVLIVGGGPASGSAAI)) interacts with FAD. Cysteine 335 and cysteine 338 are disulfide-bonded. 347 to 361 (DVAVIGGGNSGVEAA) is a binding site for NAD(+). 467-477 (TNVPGIFAAGD) is a binding site for FAD.

This sequence belongs to the class-II pyridine nucleotide-disulfide oxidoreductase family. As to quaternary structure, homodimer. FAD is required as a cofactor.

In terms of biological role, serves to protect the cell against DNA damage by alkyl hydroperoxides. It can use either NADH or NADPH as electron donor for direct reduction of redox dyes or of alkyl hydroperoxides when combined with the AhpC protein. This chain is Alkyl hydroperoxide reductase subunit F (ahpF), found in Staphylococcus aureus (strain Mu50 / ATCC 700699).